Here is a 198-residue protein sequence, read N- to C-terminus: Integrator complex subunit 8-like protein (198 aa).

Belongs to the Integrator subunit 8 family. As to quaternary structure, component of the Integrator complex. The core complex associates with protein phosphatase 2A subunits, to form the Integrator-PP2A (INTAC) complex.

The protein localises to the nucleus. It localises to the chromosome. Component of the integrator complex, a multiprotein complex that terminates RNA polymerase II (Pol II) transcription in the promoter-proximal region of genes. The integrator complex provides a quality checkpoint during transcription elongation by driving premature transcription termination of transcripts that are unfavorably configured for transcriptional elongation: the complex terminates transcription by (1) catalyzing dephosphorylation of the C-terminal domain (CTD) of Pol II subunit polr2a, (2) degrading the exiting nascent RNA transcript via endonuclease activity and (3) promoting the release of Pol II from bound DNA. The integrator complex is also involved in terminating the synthesis of non-coding Pol II transcripts, such as enhancer RNAs (eRNAs), small nuclear RNAs (snRNAs), telomerase RNAs and long non-coding RNAs (lncRNAs). Within the integrator complex, INTS8 is required for the recruitment of protein phosphatase 2A (PP2A) to transcription pause-release checkpoint. This Dictyostelium discoideum (Social amoeba) protein is Integrator complex subunit 8-like protein.